An 833-amino-acid chain; its full sequence is Glycerol-3-phosphate acyltransferase (833 aa).

An HXXXXD motif motif is present at residues 309–314 (CHRSHI).

This sequence belongs to the GPAT/DAPAT family.

Its subcellular location is the cell inner membrane. The enzyme catalyses sn-glycerol 3-phosphate + an acyl-CoA = a 1-acyl-sn-glycero-3-phosphate + CoA. It participates in phospholipid metabolism; CDP-diacylglycerol biosynthesis; CDP-diacylglycerol from sn-glycerol 3-phosphate: step 1/3. In Pseudomonas savastanoi pv. phaseolicola (strain 1448A / Race 6) (Pseudomonas syringae pv. phaseolicola (strain 1448A / Race 6)), this protein is Glycerol-3-phosphate acyltransferase.